A 962-amino-acid chain; its full sequence is Villin-5 (962 aa).

Gelsolin-like repeat units lie at residues 29–79 (FKPV…DEAG), 150–190 (VRVK…QERA), 262–305 (GQTD…DQRK), 396–453 (LQVW…EDRA), 534–574 (MQAI…EDQE), and 636–677 (LKAT…KKKP). The segment at 749-785 (KPKRRVPAYSSRSTVPDKSQPRSRSMTFSPDRARVRG) is disordered. Polar residues predominate over residues 758–776 (SSRSTVPDKSQPRSRSMTF). Phosphoserine is present on residues Ser-777 and Ser-787. Low complexity predominate over residues 845-862 (EKPTPTSQEPPTSPSSSE). Residues 845–917 (EKPTPTSQEP…LKTDSEDPVS (73 aa)) are disordered. Positions 863-875 (ATNQAEAPKSTSE) are enriched in polar residues. At Ser-883 the chain carries Phosphoserine. Over residues 889–898 (SKEEEAEEES) the composition is skewed to acidic residues. Positions 897–962 (ESSLPTFPYE…NKLKMSVNLF (66 aa)) constitute an HP domain.

This sequence belongs to the villin/gelsolin family. As to expression, ubiquitous, but expressed preferentially in pollen and stamens.

The protein resides in the cytoplasm. It is found in the cytoskeleton. In terms of biological role, major actin filament stabilizing factor and regulator of actin dynamics. Binds actin and actin filament bundles in a Ca(2+)-insensitive manner, but caps the barbed end of actin filaments and is able to sever them in a calcium-dependent manner. Required for the construction of actin collars in pollen tubes. Acts synergistically with VLN2 (AC O81644) to regulate polarized pollen tube growth. This is Villin-5 from Arabidopsis thaliana (Mouse-ear cress).